We begin with the raw amino-acid sequence, 201 residues long: Glutathione peroxidase 1 (201 aa).

Position 32 is a phosphoserine (Ser32). Sec47 is an active-site residue. Residue Sec47 is a non-standard amino acid, selenocysteine. N6-acetyllysine; alternate occurs at positions 86, 112, and 146. An N6-succinyllysine; alternate mark is found at Lys86, Lys112, and Lys146. Ser195 and Ser199 each carry phosphoserine.

This sequence belongs to the glutathione peroxidase family. Homotetramer. Interacts with MIEN1. In terms of processing, during periods of oxidative stress, Sec-47 may react with a superoxide radical, irreversibly lose hydroselenide and be converted to dehydroalanine.

Its subcellular location is the cytoplasm. The protein resides in the mitochondrion. It carries out the reaction 2 glutathione + H2O2 = glutathione disulfide + 2 H2O. It catalyses the reaction a hydroperoxy polyunsaturated fatty acid + 2 glutathione = a hydroxy polyunsaturated fatty acid + glutathione disulfide + H2O. The enzyme catalyses tert-butyl hydroperoxide + 2 glutathione = tert-butanol + glutathione disulfide + H2O. The catalysed reaction is cumene hydroperoxide + 2 glutathione = 2-phenylpropan-2-ol + glutathione disulfide + H2O. It carries out the reaction (13S)-hydroperoxy-(9Z,11E)-octadecadienoate + 2 glutathione = (13S)-hydroxy-(9Z,11E)-octadecadienoate + glutathione disulfide + H2O. It catalyses the reaction (9S)-hydroperoxy-(10E,12Z)-octadecadienoate + 2 glutathione = (9S)-hydroxy-(10E,12Z)-octadecadienoate + glutathione disulfide + H2O. The enzyme catalyses (5S)-hydroperoxy-(6E,8Z,11Z,14Z)-eicosatetraenoate + 2 glutathione = (5S)-hydroxy-(6E,8Z,11Z,14Z)-eicosatetraenoate + glutathione disulfide + H2O. The catalysed reaction is (12S)-hydroperoxy-(5Z,8Z,10E,14Z)-eicosatetraenoate + 2 glutathione = (12S)-hydroxy-(5Z,8Z,10E,14Z)-eicosatetraenoate + glutathione disulfide + H2O. It carries out the reaction (12R)-hydroperoxy-(5Z,8Z,10E,14Z)-eicosatetraenoate + 2 glutathione = (12R)-hydroxy-(5Z,8Z,10E,14Z)-eicosatetraenoate + glutathione disulfide + H2O. It catalyses the reaction (15S)-hydroperoxy-(5Z,8Z,11Z,13E)-eicosatetraenoate + 2 glutathione = (15S)-hydroxy-(5Z,8Z,11Z,13E)-eicosatetraenoate + glutathione disulfide + H2O. The enzyme catalyses (5S)-hydroperoxy-(6E,8Z,11Z,14Z,17Z)-eicosapentaenoate + 2 glutathione = (5S)-hydroxy-(6E,8Z,11Z,14Z,17Z)-eicosapentaenoate + glutathione disulfide + H2O. The catalysed reaction is (12S)-hydroperoxy-(5Z,8Z,10E,14Z,17Z)-eicosapentaenoate + 2 glutathione = (12S)-hydroxy-(5Z,8Z,10E,14Z,17Z)-eicosapentaenoate + glutathione disulfide + H2O. It carries out the reaction (15S)-hydroperoxy-(5Z,8Z,11Z,13E,17Z)-eicosapentaenoate + 2 glutathione = (15S)-hydroxy-(5Z,8Z,11Z,13E,17Z)-eicosapentaenoate + glutathione disulfide + H2O. It catalyses the reaction (15S)-hydroperoxy-(11Z,13E)-eicosadienoate + 2 glutathione = (15S)-hydroxy-(11Z,13E)-eicosadienoate + glutathione disulfide + H2O. The enzyme catalyses (17S)-hydroperoxy-(4Z,7Z,10Z,13Z,15E,19Z)-docosahexaenoate + 2 glutathione = (17S)-hydroxy-(4Z,7Z,10Z,13Z,15E,19Z)-docosahexaenoate + glutathione disulfide + H2O. Its function is as follows. Catalyzes the reduction of hydroperoxides in a glutathione-dependent manner thus regulating cellular redox homeostasis. Can reduce small soluble hydroperoxides such as H2O2, cumene hydroperoxide and tert-butyl hydroperoxide, as well as several fatty acid-derived hydroperoxides. In platelets catalyzes the reduction of 12-hydroperoxyeicosatetraenoic acid, the primary product of the arachidonate 12-lipoxygenase pathway. This is Glutathione peroxidase 1 (GPX1) from Pongo pygmaeus (Bornean orangutan).